The sequence spans 86 residues: uncharacterized protein (86 aa).

This is an uncharacterized protein from Sus scrofa (Pig).